The chain runs to 412 residues: MGDIARQAPDKDTGEDIYQYLLERITNLENRNLELREQFRQMESEKRYVETQKIRYERELRKLKSEIEQLRSPPLVIGTVTDVIDNSRVIVRSSAGPRFLVRTSQLIDPDLLKPGVRCTLNQQSLAIVDVLPTSYDAQIYGMELVESPEETYENIGGLEPQIEEIREAVELPLTKPQLFEKVGISPPKGVLLYGPPGTGKTLLARAVAHQTNAHFLRVVGSELVQKYIGEGARLVRELFDLAKQRAPSIIFIDEIDAIGAHRNDSTTSGDREVQRTLMQLLAEMDGFDNRGDVKIVAATNRIDILDRALLRPGRFDRMIEIPLPDHQGRLAILKIHTQYMNIGEDVNLSEVSRLTEGKNGADLRAICMEAGMFAIRMERDAVNSEDFMKAIDKLALDFDRHHFHTTFGEMFA.

A coiled-coil region spans residues Glu-15–Pro-73. Residues Gly-197–Leu-202 and His-336 each bind ATP. A docks into pockets in the proteasome alpha-ring to cause gate opening region spans residues Met-410–Ala-412.

It belongs to the AAA ATPase family. As to quaternary structure, homohexamer. The hexameric complex has a two-ring architecture resembling a top hat that caps the 20S proteasome core at one or both ends. Upon ATP-binding, the C-terminus of PAN interacts with the alpha-rings of the proteasome core by binding to the intersubunit pockets.

The protein resides in the cytoplasm. Functionally, ATPase which is responsible for recognizing, binding, unfolding and translocation of substrate proteins into the archaeal 20S proteasome core particle. Is essential for opening the gate of the 20S proteasome via an interaction with its C-terminus, thereby allowing substrate entry and access to the site of proteolysis. Thus, the C-termini of the proteasomal ATPase function like a 'key in a lock' to induce gate opening and therefore regulate proteolysis. Unfolding activity requires energy from ATP hydrolysis, whereas ATP binding alone promotes ATPase-20S proteasome association which triggers gate opening, and supports translocation of unfolded substrates. This is Proteasome-activating nucleotidase from Methanoculleus marisnigri (strain ATCC 35101 / DSM 1498 / JR1).